The chain runs to 149 residues: Putative oligosaccharyltransferase complex subunit CG9662 (149 aa).

Residues 1-32 (MIETLYNLPFHILVPPNIKVRRFSIPMPSPMA) are Cytoplasmic-facing. The chain crosses the membrane as a helical span at residues 33-53 (VFSVILFSYFLVTGGIIYDVI). Residues 54-83 (VEPPSLGATVDEHGHSRPVAFMPYRVNGQY) are Extracellular-facing. A helical transmembrane segment spans residues 84 to 104 (IMEGLASSFLFTVGGLGFIIM). The Cytoplasmic segment spans residues 105-117 (DQTHTPGKTNLNR). The chain crosses the membrane as a helical span at residues 118–138 (LLLTAMGFIFILVSFFTTWLF). At 139 to 149 (MRMKLPSYLQP) the chain is on the extracellular side.

It belongs to the OSTC family. As to quaternary structure, component of the oligosaccharyltransferase (OST) complex.

It localises to the membrane. Functionally, subunit of the oligosaccharyl transferase (OST) complex that catalyzes the initial transfer of a defined glycan (Glc(3)Man(9)GlcNAc(2) in eukaryotes) from the lipid carrier dolichol-pyrophosphate to an asparagine residue within an Asn-X-Ser/Thr consensus motif in nascent polypeptide chains, the first step in protein N-glycosylation. N-glycosylation occurs cotranslationally and the complex associates with the Sec61 complex at the channel-forming translocon complex that mediates protein translocation across the endoplasmic reticulum (ER). All subunits are required for a maximal enzyme activity. This is Putative oligosaccharyltransferase complex subunit CG9662 from Drosophila melanogaster (Fruit fly).